The primary structure comprises 217 residues: tRNA (guanine-N(7)-)-methyltransferase (217 aa).

Glutamate 43, aspartate 68, asparagine 101, and asparagine 123 together coordinate S-adenosyl-L-methionine. Lysine 127 is a binding site for substrate. The interaction with RNA stretch occupies residues arginine 129–arginine 134. Residues aspartate 159 and threonine 196–glutamate 199 each bind substrate.

This sequence belongs to the class I-like SAM-binding methyltransferase superfamily. TrmB family.

It catalyses the reaction guanosine(46) in tRNA + S-adenosyl-L-methionine = N(7)-methylguanosine(46) in tRNA + S-adenosyl-L-homocysteine. Its pathway is tRNA modification; N(7)-methylguanine-tRNA biosynthesis. Catalyzes the formation of N(7)-methylguanine at position 46 (m7G46) in tRNA. This Clostridium botulinum (strain Loch Maree / Type A3) protein is tRNA (guanine-N(7)-)-methyltransferase.